We begin with the raw amino-acid sequence, 92 residues long: YcgL domain-containing protein Sputcn32_1766 (92 aa).

The YcgL domain occupies 1 to 85; the sequence is MLCTVYKSTR…PQVNLLAEHK (85 aa).

In Shewanella putrefaciens (strain CN-32 / ATCC BAA-453), this protein is YcgL domain-containing protein Sputcn32_1766.